Reading from the N-terminus, the 246-residue chain is MKLFNRKVTLVSLILMAVFQFFMALIIKRIVISAGTDENFIGYLSYTPSLNILLQALTIVIAATIVSMEFDKKTIKFLLIRPVKRQKVFWSKLITVVMVSFYLYLAYYILALLFGLLFFGTSVTAESKTLLVNTLALIGSNWLEAVMMGLFGLLCSSLFRNSAVAVVVSFVVLYGASTLVQLMKLFENKWGSFLLFANTDFTQYRSGETALFSGMTPLFSIGILIIHAIFFIVVGWWCFCKRDVRV.

Transmembrane regions (helical) follow at residues 7 to 27 (KVTL…ALII), 50 to 70 (LNIL…SMEF), 99 to 119 (VSFY…LLFF), 135 to 155 (LALI…GLLC), 163 to 183 (AVAV…VQLM), and 219 to 239 (FSIG…WWCF).

The protein resides in the cell membrane. This is an uncharacterized protein from Bacillus subtilis (strain 168).